The following is a 519-amino-acid chain: Putative ATP-dependent RNA helicase L396 (519 aa).

The Helicase ATP-binding domain maps to 110–258; it reads IKGMEEGGGG…IINWYMGPIL (149 aa). Residue 123-130 coordinates ATP; it reads MGCGSGKT. Residues 211–214 carry the DEAH box motif; the sequence is DEVH. In terms of domain architecture, Helicase C-terminal spans 317–457; that stretch reads YLIQELFDMG…KQKYNIQKYY (141 aa).

The protein belongs to the DEAD box helicase family. DEAH subfamily.

It carries out the reaction ATP + H2O = ADP + phosphate + H(+). The polypeptide is Putative ATP-dependent RNA helicase L396 (Acanthamoeba polyphaga (Amoeba)).